We begin with the raw amino-acid sequence, 267 residues long: 26S proteasome non-ATPase regulatory subunit 8 homolog A (267 aa).

Methionine 1 bears the N-acetylmethionine mark. The 173-residue stretch at 79 to 251 folds into the PCI domain; sequence DAFERDFFQL…APCKEIPSLQ (173 aa).

This sequence belongs to the proteasome subunit S14 family. As to quaternary structure, component of the 19S regulatory particle (RP/PA700) lid subcomplex of the 26S proteasome. The 26S proteasome is composed of a core protease (CP), known as the 20S proteasome, capped at one or both ends by the 19S regulatory particle (RP/PA700). The RP/PA700 complex is composed of at least 17 different subunits in two subcomplexes, the base and the lid, which form the portions proximal and distal to the 20S proteolytic core, respectively. Interacts with PUB22 and PUB23. Binds to the translation initiation factors TIF3E1. Interacts with UCH1 and UCH2. Post-translationally, ubiquitinated by PUB22 and PUB23. In terms of tissue distribution, ubiquitous with highest expression in flowers.

Functionally, acts as a regulatory subunit of the 26S proteasome which is involved in the ATP-dependent degradation of ubiquitinated proteins. May help to control the degradation of one or more factors that repress cytokinin signaling. Plays an important role for balancing cell expansion with cell proliferation rates during shoot development. In Arabidopsis thaliana (Mouse-ear cress), this protein is 26S proteasome non-ATPase regulatory subunit 8 homolog A.